A 194-amino-acid polypeptide reads, in one-letter code: Factor in the germline alpha (194 aa).

A bHLH domain is found at 59-111 (ERRRVANAKERERIKNLNRGFAKLKALVPFLPQSRKPSKVDILKGATEYIQIL). Residues 121-137 (SEKQSPEEQTHSGRPSD) show a composition bias toward basic and acidic residues. The disordered stretch occupies residues 121–163 (SEKQSPEEQTHSGRPSDPHVSSTRELLGNATQPTSCASGLKKE). A compositionally biased stretch (polar residues) spans 139–157 (HVSSTRELLGNATQPTSCA).

Heterodimer with TCF3/isoform E12. In terms of tissue distribution, expressed only in the oocytes within the ovary and at lower level in the testis. Found in the resting oocytes of the primordial follicle cells, at the periphery of the ovary and in the hilar region. Also detected in growing oocytes, but at lower levels.

It is found in the nucleus. Functionally, germ-line specific transcription factor implicated in postnatal oocyte-specific gene expression. Plays a key regulatory role in the expression of multiple oocyte-specific genes, including those that initiate folliculogenesis and those that encode the zona pellucida (ZP1, ZP2 and ZP3) required for fertilization and early embryonic survival. Essential for oocytes to survive and form primordial follicles. The persistence of FIGLA in adult females suggests that it may regulate additional pathways that are essential for normal ovarian development. Binds to the E-box (5'-CANNTG-3') of the ZPs (ZP1, ZP2, ZP3) promoters. This is Factor in the germline alpha (Figla) from Mus musculus (Mouse).